Reading from the N-terminus, the 258-residue chain is Acyl-[acyl-carrier-protein]--UDP-N-acetylglucosamine O-acyltransferase (258 aa).

The protein belongs to the transferase hexapeptide repeat family. LpxA subfamily. As to quaternary structure, homotrimer.

It is found in the cytoplasm. The enzyme catalyses a (3R)-hydroxyacyl-[ACP] + UDP-N-acetyl-alpha-D-glucosamine = a UDP-3-O-[(3R)-3-hydroxyacyl]-N-acetyl-alpha-D-glucosamine + holo-[ACP]. It participates in glycolipid biosynthesis; lipid IV(A) biosynthesis; lipid IV(A) from (3R)-3-hydroxytetradecanoyl-[acyl-carrier-protein] and UDP-N-acetyl-alpha-D-glucosamine: step 1/6. Functionally, involved in the biosynthesis of lipid A, a phosphorylated glycolipid that anchors the lipopolysaccharide to the outer membrane of the cell. The protein is Acyl-[acyl-carrier-protein]--UDP-N-acetylglucosamine O-acyltransferase of Neisseria meningitidis serogroup A / serotype 4A (strain DSM 15465 / Z2491).